The chain runs to 327 residues: Malate dehydrogenase (327 aa).

11–17 (GAAGQIS) contacts NAD(+). 2 residues coordinate substrate: R92 and R98. Residues N105, Q112, and 129-131 (VGN) contribute to the NAD(+) site. N131 and R162 together coordinate substrate. Residue H187 is the Proton acceptor of the active site.

Belongs to the LDH/MDH superfamily. MDH type 2 family.

The catalysed reaction is (S)-malate + NAD(+) = oxaloacetate + NADH + H(+). Functionally, catalyzes the reversible oxidation of malate to oxaloacetate. This is Malate dehydrogenase from Cellvibrio japonicus (strain Ueda107) (Pseudomonas fluorescens subsp. cellulosa).